The primary structure comprises 340 residues: Phosphoribosylformylglycinamidine cyclo-ligase (340 aa).

This sequence belongs to the AIR synthase family.

The protein localises to the cytoplasm. It carries out the reaction 2-formamido-N(1)-(5-O-phospho-beta-D-ribosyl)acetamidine + ATP = 5-amino-1-(5-phospho-beta-D-ribosyl)imidazole + ADP + phosphate + H(+). The protein operates within purine metabolism; IMP biosynthesis via de novo pathway; 5-amino-1-(5-phospho-D-ribosyl)imidazole from N(2)-formyl-N(1)-(5-phospho-D-ribosyl)glycinamide: step 2/2. The protein is Phosphoribosylformylglycinamidine cyclo-ligase of Streptococcus pyogenes serotype M18 (strain MGAS8232).